Consider the following 284-residue polypeptide: Pseudouridine-5'-phosphate glycosidase (284 aa).

Catalysis depends on E17, which acts as the Proton donor. Residues K77 and V97 each contribute to the substrate site. D126 lines the Mn(2+) pocket. 128–130 is a substrate binding site; sequence SQD. The Nucleophile role is filled by K147.

Belongs to the pseudouridine-5'-phosphate glycosidase family. In terms of assembly, homotrimer. The cofactor is Mn(2+).

It catalyses the reaction D-ribose 5-phosphate + uracil = psi-UMP + H2O. Functionally, catalyzes the reversible cleavage of pseudouridine 5'-phosphate (PsiMP) to ribose 5-phosphate and uracil. Functions biologically in the cleavage direction, as part of a pseudouridine degradation pathway. The sequence is that of Pseudouridine-5'-phosphate glycosidase from Thermotoga petrophila (strain ATCC BAA-488 / DSM 13995 / JCM 10881 / RKU-1).